The chain runs to 147 residues: Peptide deformylase (147 aa).

Fe cation-binding residues include C88 and H130. E131 is a catalytic residue. H134 is a Fe cation binding site.

The protein belongs to the polypeptide deformylase family. Fe(2+) is required as a cofactor.

It catalyses the reaction N-terminal N-formyl-L-methionyl-[peptide] + H2O = N-terminal L-methionyl-[peptide] + formate. Functionally, removes the formyl group from the N-terminal Met of newly synthesized proteins. Requires at least a dipeptide for an efficient rate of reaction. N-terminal L-methionine is a prerequisite for activity but the enzyme has broad specificity at other positions. This Alkaliphilus metalliredigens (strain QYMF) protein is Peptide deformylase.